We begin with the raw amino-acid sequence, 344 residues long: Putative voltage-gated potassium channel subunit beta (344 aa).

The NADP(+) site is built by W33, D62, Y67, S167, Q193, W222, S223, P224, L225, K233, R243, G301, S303, Q307, E310, and N311. Y67 (proton donor/acceptor) is an active-site residue.

It belongs to the shaker potassium channel beta subunit family. As to quaternary structure, forms heteromultimeric complexes with potassium channel alpha subunits.

The protein localises to the cytoplasm. It localises to the nucleus. Functionally, probable accessory potassium channel protein which modulates the activity of the pore-forming alpha subunit. This Schizosaccharomyces pombe (strain 972 / ATCC 24843) (Fission yeast) protein is Putative voltage-gated potassium channel subunit beta.